The primary structure comprises 110 residues: UPF0060 membrane protein BPSL1340 (110 aa).

4 helical membrane-spanning segments follow: residues 9–29, 34–54, 64–84, and 86–106; these read ALFVLTAVAEIVGCYLPWLVL, PAWLLAPAALSLALFAWLLTL, AAYGGVYIAVALAWLRIVDGV, and LSRWDVAGAALALAGMSVIAL.

Belongs to the UPF0060 family.

It localises to the cell inner membrane. This chain is UPF0060 membrane protein BPSL1340, found in Burkholderia pseudomallei (strain K96243).